Reading from the N-terminus, the 214-residue chain is Adenylate kinase (214 aa).

10–15 (GAGKGT) provides a ligand contact to ATP. Residues 30-59 (STGDMLRAAVKAGTPLGLEAKKVMDAGQLV) are NMP. AMP-binding positions include T31, R36, 57–59 (QLV), 85–88 (GFPR), and Q92. The interval 122–159 (GRRVHPGSGRVYHVVFNPPKVEGKDDVTGEDLAIRPDD) is LID. Residues R123 and 132–133 (VY) each bind ATP. Positions 156 and 167 each coordinate AMP. ATP is bound at residue Q200.

The protein belongs to the adenylate kinase family. As to quaternary structure, monomer.

Its subcellular location is the cytoplasm. The enzyme catalyses AMP + ATP = 2 ADP. Its pathway is purine metabolism; AMP biosynthesis via salvage pathway; AMP from ADP: step 1/1. Catalyzes the reversible transfer of the terminal phosphate group between ATP and AMP. Plays an important role in cellular energy homeostasis and in adenine nucleotide metabolism. This chain is Adenylate kinase, found in Shewanella oneidensis (strain ATCC 700550 / JCM 31522 / CIP 106686 / LMG 19005 / NCIMB 14063 / MR-1).